Here is a 106-residue protein sequence, read N- to C-terminus: Large ribosomal subunit protein uL24 (106 aa).

Belongs to the universal ribosomal protein uL24 family. As to quaternary structure, part of the 50S ribosomal subunit.

Its function is as follows. One of two assembly initiator proteins, it binds directly to the 5'-end of the 23S rRNA, where it nucleates assembly of the 50S subunit. Functionally, one of the proteins that surrounds the polypeptide exit tunnel on the outside of the subunit. The chain is Large ribosomal subunit protein uL24 from Acidiphilium cryptum (strain JF-5).